The primary structure comprises 337 residues: MKAPAFWYAPPGTARPLLSALLTPAALAWTAATRRRLSGTRPWHAPVPVICVGNLVAGGAGKTPVVLDLLSRLRRGGLDAHALSRGHGGRLPGPLRVDPARHTAAEVGDEPLLLAAAAPAWIARDRAAGARAAADAGAGVLVLDDGFQNPGIAKDLSLLVVDGDAGFGNGRVIPAGPLREPVADGLARAQAVLLLGEDRRGTADLCRGRLPVLRGRLVPDPQAAADLEGRRVLAFAGIGRPEKLFRTLEALGADVVARLPFPDHHPFTAAELRALLDRAAALDALPVTTQKDLVRLPAELRGQVRALPVSIAWEEPDTLDRLLAPLLSGKDDHGQAQ.

56 to 63 contributes to the ATP binding site; that stretch reads VAGGAGKT.

Belongs to the LpxK family.

The catalysed reaction is a lipid A disaccharide + ATP = a lipid IVA + ADP + H(+). Its pathway is glycolipid biosynthesis; lipid IV(A) biosynthesis; lipid IV(A) from (3R)-3-hydroxytetradecanoyl-[acyl-carrier-protein] and UDP-N-acetyl-alpha-D-glucosamine: step 6/6. Its function is as follows. Transfers the gamma-phosphate of ATP to the 4'-position of a tetraacyldisaccharide 1-phosphate intermediate (termed DS-1-P) to form tetraacyldisaccharide 1,4'-bis-phosphate (lipid IVA). The chain is Tetraacyldisaccharide 4'-kinase from Rhodospirillum centenum (strain ATCC 51521 / SW).